Reading from the N-terminus, the 312-residue chain is Malate dehydrogenase (312 aa).

Residues 7–13 (GAAGGIG) and Asp-34 contribute to the NAD(+) site. Arg-81 and Arg-87 together coordinate substrate. NAD(+)-binding positions include Asn-94 and 117–119 (ITN). The substrate site is built by Asn-119 and Arg-153. His-177 acts as the Proton acceptor in catalysis. An NAD(+)-binding site is contributed by Met-227.

The protein belongs to the LDH/MDH superfamily. MDH type 1 family. Homodimer.

The catalysed reaction is (S)-malate + NAD(+) = oxaloacetate + NADH + H(+). Its function is as follows. Catalyzes the reversible oxidation of malate to oxaloacetate. This chain is Malate dehydrogenase, found in Photorhabdus laumondii subsp. laumondii (strain DSM 15139 / CIP 105565 / TT01) (Photorhabdus luminescens subsp. laumondii).